A 436-amino-acid polypeptide reads, in one-letter code: Bystin (436 aa).

The residue at position 145 (Thr-145) is a Phosphothreonine. Ser-148 and Ser-152 each carry phosphoserine.

Belongs to the bystin family.

Its subcellular location is the nucleus. It localises to the nucleolus. In terms of biological role, required for processing of 20S pre-rRNA precursor and biogenesis of 40S ribosomal subunits. This Drosophila melanogaster (Fruit fly) protein is Bystin (bys).